We begin with the raw amino-acid sequence, 275 residues long: Stage 0 sporulation protein YaaT (275 aa).

The 86-residue stretch at 61 to 146 (RKVIRVADDR…FKTRIELRQI (86 aa)) folds into the PSP1 C-terminal domain.

The protein resides in the cytoplasm. Its function is as follows. Essential for the phosphorelay during initiation of sporulation. May control the level of phosphorylated spo0A through spo0E activity during sporulation. The chain is Stage 0 sporulation protein YaaT (yaaT) from Bacillus subtilis (strain 168).